We begin with the raw amino-acid sequence, 594 residues long: APOBEC1 complementation factor (594 aa).

3 RRM domains span residues 56–134, 136–218, and 231–303; these read CEIF…ASVD, CRLF…WAEP, and KILY…LAKP. The interval 360-409 is required for nuclear localization; it reads HFPATKGHLSNRAIIRAPSVREIYMNVPVGAAGVRGLGGRGYLAYTGLGR. A Phosphothreonine modification is found at threonine 499.

As to quaternary structure, part of the apolipoprotein B mRNA editing complex with APOBEC1. Interacts with TNPO2; TNPO2 may be responsible for transport of A1CF into the nucleus. Interacts with SYNCRIP. Interacts with CELF2/CUGBP2. Interacts with RBM47. Widely expressed with highest levels in brain, liver, pancreas, colon and spleen.

The protein resides in the nucleus. It is found in the endoplasmic reticulum. Its subcellular location is the cytoplasm. In terms of biological role, essential component of the apolipoprotein B mRNA editing enzyme complex which is responsible for the postranscriptional editing of a CAA codon for Gln to a UAA codon for stop in APOB mRNA. Binds to APOB mRNA and is probably responsible for docking the catalytic subunit, APOBEC1, to the mRNA to allow it to deaminate its target cytosine. The complex also protects the edited APOB mRNA from nonsense-mediated decay. The polypeptide is APOBEC1 complementation factor (A1CF) (Homo sapiens (Human)).